The primary structure comprises 303 residues: Putative S-adenosyl-L-methionine-dependent methyltransferase MAV_4435 (303 aa).

S-adenosyl-L-methionine-binding positions include aspartate 129 and 158-159 (DL).

Belongs to the UPF0677 family.

In terms of biological role, exhibits S-adenosyl-L-methionine-dependent methyltransferase activity. This chain is Putative S-adenosyl-L-methionine-dependent methyltransferase MAV_4435, found in Mycobacterium avium (strain 104).